The following is a 245-amino-acid chain: 1-(5-phosphoribosyl)-5-[(5-phosphoribosylamino)methylideneamino] imidazole-4-carboxamide isomerase (245 aa).

The active-site Proton acceptor is the Asp7. Asp129 functions as the Proton donor in the catalytic mechanism.

The protein belongs to the HisA/HisF family.

The protein localises to the cytoplasm. It catalyses the reaction 1-(5-phospho-beta-D-ribosyl)-5-[(5-phospho-beta-D-ribosylamino)methylideneamino]imidazole-4-carboxamide = 5-[(5-phospho-1-deoxy-D-ribulos-1-ylimino)methylamino]-1-(5-phospho-beta-D-ribosyl)imidazole-4-carboxamide. It functions in the pathway amino-acid biosynthesis; L-histidine biosynthesis; L-histidine from 5-phospho-alpha-D-ribose 1-diphosphate: step 4/9. In Enterobacter sp. (strain 638), this protein is 1-(5-phosphoribosyl)-5-[(5-phosphoribosylamino)methylideneamino] imidazole-4-carboxamide isomerase.